Here is a 423-residue protein sequence, read N- to C-terminus: Serine hydroxymethyltransferase (423 aa).

Position 121–123 (121–123 (GHI)) interacts with (6S)-5,6,7,8-tetrahydrofolate. N6-(pyridoxal phosphate)lysine is present on Lys-227. Glu-242 is a binding site for (6S)-5,6,7,8-tetrahydrofolate.

It belongs to the SHMT family. In terms of assembly, homodimer. It depends on pyridoxal 5'-phosphate as a cofactor.

Its subcellular location is the cytoplasm. The catalysed reaction is 5,10-methylenetetrahydromethanopterin + glycine + H2O = 5,6,7,8-tetrahydromethanopterin + L-serine. It participates in amino-acid biosynthesis; glycine biosynthesis; glycine from L-serine: step 1/1. In terms of biological role, catalyzes the reversible interconversion of serine and glycine with tetrahydromethanopterin (H4MPT) serving as the one-carbon carrier. Cannot use tetrahydrofolate (THF or H4PteGlu) instead of H4MPT as the pteridine substrate. Also probably exhibits a pteridine-independent aldolase activity toward beta-hydroxyamino acids, producing glycine and aldehydes, via a retro-aldol mechanism. The polypeptide is Serine hydroxymethyltransferase (Methanothermobacter thermautotrophicus (strain ATCC 29096 / DSM 1053 / JCM 10044 / NBRC 100330 / Delta H) (Methanobacterium thermoautotrophicum)).